The sequence spans 409 residues: Phenoxybenzoate dioxygenase subunit alpha (409 aa).

Residues 45 to 149 form the Rieske domain; it reads WQPVALSADV…VEERYGLVFA (105 aa). The [2Fe-2S] cluster site is built by C85, H87, C104, and H107. Residues H210 and H215 each contribute to the Fe cation site.

It belongs to the bacterial ring-hydroxylating dioxygenase alpha subunit family. In terms of assembly, this dioxygenase system consists of two proteins: the alpha subunit (PobA) and a subunit (PobB) that acts as a ferredoxin and a ferredoxin reductase. [2Fe-2S] cluster is required as a cofactor. Fe cation serves as cofactor.

Its pathway is aromatic compound metabolism; carboxydiphenyl ether degradation. Degrades exclusively diarylether compounds having carboxyl groups in the 3- or 4-position. Yields a hemiacetal that spontaneously hydrolyzes to phenol and protocatechuate. The protein is Phenoxybenzoate dioxygenase subunit alpha (pobA) of Ectopseudomonas oleovorans (Pseudomonas oleovorans).